The following is a 1352-amino-acid chain: Ubiquitin carboxyl-terminal hydrolase 31 (1352 aa).

Residues 1 to 16 (MSKVTAPGSGPPAAAS) are compositionally biased toward low complexity. Disordered regions lie at residues 1-62 (MSKV…RSVG) and 79-119 (SSEG…PPAC). A compositionally biased stretch (gly residues) spans 32–43 (RAGGGGAGGPGA). Residues 44 to 62 (SGPAAPSSPSSPSSARSVG) are compositionally biased toward low complexity. Residues 95 to 117 (PPGPAAAPTPPPCPPPPASPAPP) are compositionally biased toward pro residues. Residues 128-765 (AGLRNHGNTC…TAYILFYQRR (638 aa)) form the USP domain. Residue Cys-137 is the Nucleophile of the active site. A disordered region spans residues 162–185 (RAGRPEPSPDPEQPAGRGAQGQGE). His-723 serves as the catalytic Proton acceptor. Disordered stretches follow at residues 812-835 (LASLSESVEMTGERSEDDGGFSTR), 919-939 (SSSYQEPSDSHSRREHKAVGR), and 951-1352 (DESD…QKPQ). Over residues 958–970 (LNSSVVDTQSKHS) the composition is skewed to polar residues. Low complexity-rich tracts occupy residues 992–1001 (VDQSDSVDSS), 1051–1070 (SSLSSTSPSSPLPVKVSLKP), 1078–1089 (DSSSRGSGRHSS), and 1101–1138 (PKSQDSVSSPSPQKQKSASALTYTASSTSAKKASGPAT). Basic and acidic residues predominate over residues 1148–1159 (RTSDHSLSREGS). Residues 1160-1181 (RQSLGSDRASATSTSKPNSPRV) show a composition bias toward polar residues. Residues 1198–1210 (SSSMASLRSPSTS) are compositionally biased toward low complexity. Composition is skewed to basic and acidic residues over residues 1215-1225 (LKRDSKSEDKG) and 1234-1243 (RQKETRRSTD). The segment covering 1251 to 1264 (SKKAGGSSVKSVCK) has biased composition (low complexity). Residue Lys-1264 is modified to N6-acetyllysine. 2 stretches are compositionally biased toward polar residues: residues 1278-1290 (PASQQPNANTTGK) and 1341-1352 (MQTSARPSQKPQ).

Belongs to the peptidase C19 family. Post-translationally, acetylated at Lys-1264. Acetylation decreases activity. Deacetylated by SIRT1. As to expression, widely expressed.

The enzyme catalyses Thiol-dependent hydrolysis of ester, thioester, amide, peptide and isopeptide bonds formed by the C-terminal Gly of ubiquitin (a 76-residue protein attached to proteins as an intracellular targeting signal).. In terms of biological role, deubiquitinase that recognizes and hydrolyzes the peptide bond at the C-terminal Gly of ubiquitin. May play a role in the regulation of NF-kappa-B signaling pathway by deubiquitinating TRAF2. Its function is as follows. (Microbial infection) Plays a positive role in foot-and-mouth disease and classical swine fever viral infection. Mechanistically, associates with internal ribosomal entry site (IRES) element within the 5'-untranslated region of viral genomes to promote translation of the virus-encoded polyprotein. The chain is Ubiquitin carboxyl-terminal hydrolase 31 (USP31) from Homo sapiens (Human).